The chain runs to 224 residues: Lipoprotein-releasing system ATP-binding protein LolD (224 aa).

The ABC transporter domain maps to Leu6–Ile224. An ATP-binding site is contributed by Gly43 to Thr50.

The protein belongs to the ABC transporter superfamily. Lipoprotein translocase (TC 3.A.1.125) family. The complex is composed of two ATP-binding proteins (LolD) and two transmembrane proteins (LolC and LolE).

The protein localises to the cell inner membrane. Its function is as follows. Part of the ABC transporter complex LolCDE involved in the translocation of mature outer membrane-directed lipoproteins, from the inner membrane to the periplasmic chaperone, LolA. Responsible for the formation of the LolA-lipoprotein complex in an ATP-dependent manner. The chain is Lipoprotein-releasing system ATP-binding protein LolD from Neorickettsia sennetsu (strain ATCC VR-367 / Miyayama) (Ehrlichia sennetsu).